Consider the following 494-residue polypeptide: MNNSVDFGGRPFHFIGIGGIGMSALAYVLAKRQLPVSGSDLRPNHITRKLESIGAHIFSRQEASNLEFFGSKVSSTEIELNTQEMFPLGKSTLPQVVCSTAINSNNLEYQAAIELGCPILHRSDVLAALINDYHSVAVAGTHGKTTTSSMIGYMLLEAGLDPTIIVGGEVNAWEGNARLGQSPYLVAEADESDGSLVKHAPEIGIITNIELDHPDHYDTLEEVVDIFQTFAKGCKTLIGSVDCATVRELLRTAASDRQQPTITYSLHQDTEADYTVTNIDCRADGTTALVWEKGKALGVLKLKLLSRHNLSNALAAVAVGRLVGLEFGEIAKGIAGFEGARRRFEFRGEVDGITFIDDYAHHPSEIRATLAAARLQARPGQRVVAIFQPHRYSRTLTFLEEFSESFSHADLVVLTDIYSAGEPNLGLISGEQLAEKIAQEHPQVVYQPTLSTVCEYLLKNLRPGDLALFLGAGNLNQAIPEIITTLCEPATATL.

Residue 140 to 146 (GTHGKTT) participates in ATP binding.

It belongs to the MurCDEF family.

The protein resides in the cytoplasm. It carries out the reaction UDP-N-acetyl-alpha-D-muramate + L-alanine + ATP = UDP-N-acetyl-alpha-D-muramoyl-L-alanine + ADP + phosphate + H(+). The protein operates within cell wall biogenesis; peptidoglycan biosynthesis. In terms of biological role, cell wall formation. This is UDP-N-acetylmuramate--L-alanine ligase from Trichormus variabilis (strain ATCC 29413 / PCC 7937) (Anabaena variabilis).